The primary structure comprises 162 residues: Caveolin-2 (162 aa).

The Cytoplasmic segment spans residues 1–86; that stretch reads MGLETEKADV…FEVSKYVIYK (86 aa). Phosphotyrosine; by SRC is present on tyrosine 19. Phosphoserine is present on residues serine 20 and serine 23. Tyrosine 27 carries the phosphotyrosine; by SRC modification. The helical intramembrane region spans 87-107; that stretch reads FLTLFLAIPLAFAAGILFATL. Topologically, residues 108–162 are cytoplasmic; the sequence is SCLHIWIVMPFVKTCLMVLPSVQTIWKSVTDVVIAPLCASVGRSFSSVSMQLSRD.

This sequence belongs to the caveolin family. Monomer or homodimer. Interacts with CAV1; the interaction forms a stable heterooligomeric complex that is required for targeting to lipid rafts and for caveolae formation. Tyrosine phosphorylated forms do not form heterooligomers with the Tyr-19-phosphorylated form existing as a monomer or dimer, and the Tyr-27-form as a monomer only. Interacts (tyrosine phosphorylated form) with the SH2 domain-containing proteins, RASA1, NCK1 and SRC. Interacts (tyrosine phosphorylated form) with INSR, the interaction (Tyr-27-phosphorylated form) is increased on insulin stimulation. Interacts (Tyr-19 phosphorylated form) with MAPK1 (phosphorylated form); the interaction, promoted by insulin, leads to nuclear location and MAPK1 activation. Interacts with STAT3; the interaction is increased on insulin-induced tyrosine phosphorylation leading to STAT activation. Post-translationally, phosphorylated on serine and tyrosine residues. CAV1 promotes phosphorylation on Ser-23 which then targets the complex to the plasma membrane, lipid rafts and caveolae. Phosphorylation on both Tyr-19 and Tyr-27 is required for insulin-induced 'Ser-727' phosphorylation of STAT3 and its activation. Phosphorylation on Tyr-19 is required for insulin-induced phosphorylation of MAPK1 and DNA binding of STAT3. Tyrosine phosphorylation is induced by both EGF and insulin.

The protein localises to the nucleus. It localises to the cytoplasm. The protein resides in the golgi apparatus membrane. It is found in the cell membrane. Its subcellular location is the membrane. The protein localises to the caveola. May act as a scaffolding protein within caveolar membranes. Interacts directly with G-protein alpha subunits and can functionally regulate their activity. Acts as an accessory protein in conjunction with CAV1 in targeting to lipid rafts and driving caveolae formation. Positive regulator of cellular mitogenesis of the MAPK signaling pathway. Required for the insulin-stimulated nuclear translocation and activation of MAPK1 and STAT3, and the subsequent regulation of cell cycle progression. This Rhinolophus ferrumequinum (Greater horseshoe bat) protein is Caveolin-2 (CAV2).